The chain runs to 72 residues: Small, acid-soluble spore protein C (72 aa).

It belongs to the alpha/beta-type SASP family.

Its function is as follows. SASP are bound to spore DNA. They are double-stranded DNA-binding proteins that cause DNA to change to an a-like conformation. They protect the DNA backbone from chemical and enzymatic cleavage and are thus involved in dormant spore's high resistance to UV light. The sequence is that of Small, acid-soluble spore protein C (sspC) from Bacillus subtilis (strain 168).